We begin with the raw amino-acid sequence, 342 residues long: Phosphoribosylformylglycinamidine cyclo-ligase (342 aa).

The protein belongs to the AIR synthase family.

The protein localises to the cytoplasm. The enzyme catalyses 2-formamido-N(1)-(5-O-phospho-beta-D-ribosyl)acetamidine + ATP = 5-amino-1-(5-phospho-beta-D-ribosyl)imidazole + ADP + phosphate + H(+). It functions in the pathway purine metabolism; IMP biosynthesis via de novo pathway; 5-amino-1-(5-phospho-D-ribosyl)imidazole from N(2)-formyl-N(1)-(5-phospho-D-ribosyl)glycinamide: step 2/2. This chain is Phosphoribosylformylglycinamidine cyclo-ligase, found in Staphylococcus aureus (strain bovine RF122 / ET3-1).